The chain runs to 252 residues: MSGHSKWHTIRRAKSANDQRRGQLFTKLARDITIATREGGSGDPELNFRLRLAIEKARANNMPNENIQRAIERGLGKSNEAAIEEIFYEGYGPGGVAILIEAATDNRNRTSSDVRATFNKNGGSPGEPGSVSWMFEQKGLITVDLSATKRDPDELQLLAIDAGADDVIVDDETLEIYCEWTQLNAVRQALLDQGVPISNAEKIMRAKTLIQPDEKDALAALRLIEKLEDLDDVQKVYSNLDITTELVERFDS.

A compositionally biased stretch (basic residues) spans 1–14; it reads MSGHSKWHTIRRAK. The tract at residues 1 to 22 is disordered; the sequence is MSGHSKWHTIRRAKSANDQRRG.

The protein belongs to the TACO1 family.

The protein resides in the cytoplasm. In Chloroflexus aggregans (strain MD-66 / DSM 9485), this protein is Probable transcriptional regulatory protein Cagg_2594.